A 293-amino-acid chain; its full sequence is Ribosomal protein L11 methyltransferase (293 aa).

Residues Thr145, Gly166, Asp188, and Asn230 each coordinate S-adenosyl-L-methionine.

Belongs to the methyltransferase superfamily. PrmA family.

It is found in the cytoplasm. The catalysed reaction is L-lysyl-[protein] + 3 S-adenosyl-L-methionine = N(6),N(6),N(6)-trimethyl-L-lysyl-[protein] + 3 S-adenosyl-L-homocysteine + 3 H(+). Its function is as follows. Methylates ribosomal protein L11. This Escherichia coli O8 (strain IAI1) protein is Ribosomal protein L11 methyltransferase.